Consider the following 157-residue polypeptide: 2-C-methyl-D-erythritol 2,4-cyclodiphosphate synthase (157 aa).

Residues Asp8 and His10 each contribute to the a divalent metal cation site. Residues 8 to 10 (DVH) and 34 to 35 (HS) contribute to the 4-CDP-2-C-methyl-D-erythritol 2-phosphate site. His42 lines the a divalent metal cation pocket. Residues 56–58 (DIG), 61–65 (FPDTD), 100–106 (AQKPKMA), 132–135 (TTTE), and Phe139 contribute to the 4-CDP-2-C-methyl-D-erythritol 2-phosphate site.

This sequence belongs to the IspF family. As to quaternary structure, homotrimer. A divalent metal cation serves as cofactor.

It catalyses the reaction 4-CDP-2-C-methyl-D-erythritol 2-phosphate = 2-C-methyl-D-erythritol 2,4-cyclic diphosphate + CMP. The protein operates within isoprenoid biosynthesis; isopentenyl diphosphate biosynthesis via DXP pathway; isopentenyl diphosphate from 1-deoxy-D-xylulose 5-phosphate: step 4/6. Its function is as follows. Involved in the biosynthesis of isopentenyl diphosphate (IPP) and dimethylallyl diphosphate (DMAPP), two major building blocks of isoprenoid compounds. Catalyzes the conversion of 4-diphosphocytidyl-2-C-methyl-D-erythritol 2-phosphate (CDP-ME2P) to 2-C-methyl-D-erythritol 2,4-cyclodiphosphate (ME-CPP) with a corresponding release of cytidine 5-monophosphate (CMP). This Alkaliphilus oremlandii (strain OhILAs) (Clostridium oremlandii (strain OhILAs)) protein is 2-C-methyl-D-erythritol 2,4-cyclodiphosphate synthase.